The sequence spans 915 residues: Metabotropic glutamate receptor 7 (915 aa).

Residues 1–34 form the signal peptide; the sequence is MVQLGKLLRVLTLMKFPCCVLEVLLCVLAAAARG. At 35–590 the chain is on the extracellular side; the sequence is QEMYAPHSIR…IIKLEWHSPW (556 aa). Cysteine 67 and cysteine 109 are disulfide-bonded. A glycan (N-linked (GlcNAc...) asparagine) is linked at asparagine 98. L-glutamate is bound by residues serine 159, 180-182, tyrosine 230, and aspartate 314; that span reads AST. Intrachain disulfides connect cysteine 249/cysteine 541, cysteine 374/cysteine 390, cysteine 430/cysteine 437, cysteine 523/cysteine 542, cysteine 527/cysteine 545, cysteine 548/cysteine 560, and cysteine 563/cysteine 576. Residue lysine 407 coordinates L-glutamate. N-linked (GlcNAc...) asparagine glycosylation is found at asparagine 458 and asparagine 486. N-linked (GlcNAc...) asparagine glycosylation occurs at asparagine 572. Residues 591-615 traverse the membrane as a helical segment; sequence AVIPVFLAMLGIIATIFVMATFIRY. Residues 616–627 lie on the Cytoplasmic side of the membrane; it reads NDTPIVRASGRE. A helical transmembrane segment spans residues 628–648; the sequence is LSYVLLTGIFLCYIITFLMIA. Residues 649 to 654 lie on the Extracellular side of the membrane; the sequence is KPDVAV. Residues 655 to 675 form a helical membrane-spanning segment; it reads CSFRRVFLGLGMCISYAALLT. Topologically, residues 676–702 are cytoplasmic; sequence KTNRIYRIFEQGKKSVTAPRLISPTSQ. The helical transmembrane segment at 703-723 threads the bilayer; that stretch reads LAITSSLISVQLLGVFIWFGV. Over 724–753 the chain is Extracellular; it reads DPPNIIIDYDEHKTMNPEQARGVLKCDITD. Residues 754–775 form a helical membrane-spanning segment; that stretch reads LQIICSLGYSILLMVTCTVYAI. The Cytoplasmic portion of the chain corresponds to 776–788; it reads KTRGVPENFNEAK. A helical transmembrane segment spans residues 789 to 810; that stretch reads PIGFTMYTTCIVWLAFIPIFFG. The Extracellular portion of the chain corresponds to 811–825; the sequence is TAQSAEKLYIQTTTL. A helical transmembrane segment spans residues 826–850; the sequence is TISMNLSASVALGMLYMPKVYIIIF. Residues 851 to 915 lie on the Cytoplasmic side of the membrane; it reads HPELNVQKRK…KYVSYNNLVI (65 aa). The segment at 874-895 is disordered; it reads SRLSHKPSDRPNGEAKTELCEN. Basic and acidic residues predominate over residues 879–892; it reads KPSDRPNGEAKTEL. Serine 900 is subject to Phosphoserine.

The protein belongs to the G-protein coupled receptor 3 family. In terms of assembly, homodimer. Interacts with PICK1.

The protein localises to the cell membrane. G-protein coupled receptor activated by glutamate that regulates axon outgrowth through the MAPK-cAMP-PKA signaling pathway during neuronal development. Ligand binding causes a conformation change that triggers signaling via guanine nucleotide-binding proteins (G proteins) and modulates the activity of downstream effectors, such as adenylate cyclase that it inhibits. The sequence is that of Metabotropic glutamate receptor 7 (Grm7) from Mus musculus (Mouse).